Consider the following 239-residue polypeptide: tRNA (guanine-N(7)-)-methyltransferase (239 aa).

Residues Glu-69, Glu-94, Asp-121, and Asp-144 each contribute to the S-adenosyl-L-methionine site. Asp-144 is an active-site residue. Lys-148 contributes to the substrate binding site. Residues 150–155 (RHNKRR) are interaction with RNA. Substrate contacts are provided by residues Asp-180 and 217 to 220 (TKFE).

It belongs to the class I-like SAM-binding methyltransferase superfamily. TrmB family. Monomer.

The enzyme catalyses guanosine(46) in tRNA + S-adenosyl-L-methionine = N(7)-methylguanosine(46) in tRNA + S-adenosyl-L-homocysteine. Its pathway is tRNA modification; N(7)-methylguanine-tRNA biosynthesis. In terms of biological role, catalyzes the formation of N(7)-methylguanine at position 46 (m7G46) in tRNA. This Salmonella choleraesuis (strain SC-B67) protein is tRNA (guanine-N(7)-)-methyltransferase.